Consider the following 741-residue polypeptide: Double-stranded RNA-specific editase 1 (741 aa).

Positions 1–79 (MDIEDEENMS…RRKTPGPVLP (79 aa)) are disordered. Ser-26 carries the phosphoserine modification. Residues 33 to 49 (PGPGEGSQLSNGGGGGP) are compositionally biased toward gly residues. Over residues 63-73 (SKYRLKKRRKT) the composition is skewed to basic residues. A DRBM 1 domain is found at 78 to 144 (LPKNALMQLN…AEKALRSFVQ (67 aa)). 2 interaction with substrate RNA regions span residues 83–88 (LMQLNE) and 104–105 (VH). Ser-149 carries the phosphoserine modification. The region spanning 231 to 298 (PSGKNPVMIL…AQSALAAIFN (68 aa)) is the DRBM 2 domain. Interaction with substrate RNA stretches follow at residues 237 to 242 (VMILNE) and His-259. Residues 370–737 (SVSTGTKCIN…VEKPTEQDQF (368 aa)) form the A to I editase domain. Residue His-394 coordinates Zn(2+). Residue Glu-396 is the Proton donor of the active site. The 1D-myo-inositol hexakisphosphate site is built by Arg-400 and Arg-401. A Zn(2+)-binding site is contributed by Cys-451. Positions 486-518 (RPPGLLSDPSTSTFQGAGTTEPADRHPNRKARG) are disordered. Residues 493–503 (DPSTSTFQGAG) show a composition bias toward polar residues. Cys-556 contacts Zn(2+). 1D-myo-inositol hexakisphosphate contacts are provided by Lys-559, Arg-562, Lys-669, Lys-702, Lys-712, and Lys-730.

In terms of assembly, homodimer. Homodimerization is essential for its catalytic activity. Can form heterodimers with isoform 5 of ADAR/ADAR1. 1D-myo-inositol hexakisphosphate is required as a cofactor. As to expression, highly expressed in brain and heart and at lower levels in placenta. Fair expression in lung, liver and kidney. Detected in brain, heart, kidney, lung and liver (at protein level). In terms of tissue distribution, highly expressed in hippocampus and colon. Expressed in pediatric astrocytomas and the protein has a decreased RNA-editing activity. The decrease in RNA editing correlates with the grade of malignancy of the tumors, with the high grade tumors showing lower editing is seen.

Its subcellular location is the nucleus. The protein localises to the nucleolus. The catalysed reaction is adenosine in double-stranded RNA + H2O + H(+) = inosine in double-stranded RNA + NH4(+). Its function is as follows. Catalyzes the hydrolytic deamination of adenosine to inosine in double-stranded RNA (dsRNA) referred to as A-to-I RNA editing. This may affect gene expression and function in a number of ways that include mRNA translation by changing codons and hence the amino acid sequence of proteins; pre-mRNA splicing by altering splice site recognition sequences; RNA stability by changing sequences involved in nuclease recognition; genetic stability in the case of RNA virus genomes by changing sequences during viral RNA replication; and RNA structure-dependent activities such as microRNA production or targeting or protein-RNA interactions. Can edit both viral and cellular RNAs and can edit RNAs at multiple sites (hyper-editing) or at specific sites (site-specific editing). Its cellular RNA substrates include: bladder cancer-associated protein (BLCAP), neurotransmitter receptors for glutamate (GRIA2 and GRIK2) and serotonin (HTR2C), GABA receptor (GABRA3) and potassium voltage-gated channel (KCNA1). Site-specific RNA editing of transcripts encoding these proteins results in amino acid substitutions which consequently alter their functional activities. Edits GRIA2 at both the Q/R and R/G sites efficiently but converts the adenosine in hotspot1 much less efficiently. Can exert a proviral effect towards human immunodeficiency virus type 1 (HIV-1) and enhances its replication via both an editing-dependent and editing-independent mechanism. The former involves editing of adenosines in the 5'UTR while the latter occurs via suppression of EIF2AK2/PKR activation and function. Can inhibit cell proliferation and migration and can stimulate exocytosis. Functionally, has a lower catalytic activity than isoform 2. In terms of biological role, has a higher catalytic activity than isoform 1. The polypeptide is Double-stranded RNA-specific editase 1 (Homo sapiens (Human)).